Reading from the N-terminus, the 182-residue chain is Transcription termination/antitermination protein NusG (182 aa).

It belongs to the NusG family.

Its function is as follows. Participates in transcription elongation, termination and antitermination. The polypeptide is Transcription termination/antitermination protein NusG (Chlamydia trachomatis serovar D (strain ATCC VR-885 / DSM 19411 / UW-3/Cx)).